The sequence spans 622 residues: Elongation factor 4 (622 aa).

The region spanning 17 to 198 (ELLRNFCIIA…QIVRQIPAPV (182 aa)) is the tr-type G domain. Residues 29 to 34 (DHGKST) and 145 to 148 (NKID) contribute to the GTP site.

It belongs to the TRAFAC class translation factor GTPase superfamily. Classic translation factor GTPase family. LepA subfamily.

It is found in the cell membrane. The catalysed reaction is GTP + H2O = GDP + phosphate + H(+). Functionally, required for accurate and efficient protein synthesis under certain stress conditions. May act as a fidelity factor of the translation reaction, by catalyzing a one-codon backward translocation of tRNAs on improperly translocated ribosomes. Back-translocation proceeds from a post-translocation (POST) complex to a pre-translocation (PRE) complex, thus giving elongation factor G a second chance to translocate the tRNAs correctly. Binds to ribosomes in a GTP-dependent manner. This chain is Elongation factor 4, found in Kineococcus radiotolerans (strain ATCC BAA-149 / DSM 14245 / SRS30216).